Consider the following 194-residue polypeptide: Thymidine kinase (194 aa).

ATP is bound by residues 15–22 (GSMFSGKS) and 88–91 (DEVQ). Glutamate 89 (proton acceptor) is an active-site residue. Zn(2+) contacts are provided by cysteine 145, cysteine 148, cysteine 183, and histidine 186.

The protein belongs to the thymidine kinase family. Homotetramer.

Its subcellular location is the cytoplasm. It carries out the reaction thymidine + ATP = dTMP + ADP + H(+). The polypeptide is Thymidine kinase (Bacillus licheniformis (strain ATCC 14580 / DSM 13 / JCM 2505 / CCUG 7422 / NBRC 12200 / NCIMB 9375 / NCTC 10341 / NRRL NRS-1264 / Gibson 46)).